A 50-amino-acid chain; its full sequence is Small nuclear ribonucleoprotein Sm D2 (50 aa).

The segment at 1-36 (MSLLNKPKSEMTPEELQKREEEEFNTGPLSVXTQSX) is disordered. Ser-2 is modified (N-acetylserine). Glycyl lysine isopeptide (Lys-Gly) (interchain with G-Cter in SUMO2) cross-links involve residues Lys-6 and Lys-8. Residues 7–21 (PKSEMTPEELQKREE) are compositionally biased toward basic and acidic residues. Residue Ser-9 is modified to Phosphoserine. Phosphothreonine is present on Thr-12.

Belongs to the snRNP core protein family. In terms of assembly, core component of the spliceosomal U1, U2, U4 and U5 small nuclear ribonucleoproteins (snRNPs), the building blocks of the spliceosome. Most spliceosomal snRNPs contain a common set of Sm proteins, SNRPB, SNRPD1, SNRPD2, SNRPD3, SNRPE, SNRPF and SNRPG that assemble in a heptameric protein ring on the Sm site of the small nuclear RNA to form the core snRNP. Component of the U1 snRNP. The U1 snRNP is composed of the U1 snRNA and the 7 core Sm proteins SNRPB, SNRPD1, SNRPD2, SNRPD3, SNRPE, SNRPF and SNRPG, and at least three U1 snRNP-specific proteins SNRNP70/U1-70K, SNRPA/U1-A and SNRPC/U1-C. Component of the U4/U6-U5 tri-snRNP complex composed of the U4, U6 and U5 snRNAs and at least PRPF3, PRPF4, PRPF6, PRPF8, PRPF31, SNRNP200, TXNL4A, SNRNP40, SNRPB, SNRPD1, SNRPD2, SNRPD3, SNRPE, SNRPF, SNRPG, DDX23, CD2BP2, PPIH, SNU13, EFTUD2, SART1 and USP39, plus LSM2, LSM3, LSM4, LSM5, LSM6, LSM7 and LSM8. Component of the minor spliceosome, which splices U12-type introns. Part of the SMN-Sm complex that contains SMN1, GEMIN2/SIP1, DDX20/GEMIN3, GEMIN4, GEMIN5, GEMIN6, GEMIN7, GEMIN8, STRAP/UNRIP and the Sm proteins SNRPB, SNRPD1, SNRPD2, SNRPD3, SNRPE, SNRPF and SNRPG; catalyzes core snRNPs assembly. Forms a 6S pICln-Sm complex composed of CLNS1A/pICln, SNRPD1, SNRPD2, SNRPE, SNRPF and SNRPG; ring-like structure where CLNS1A/pICln mimics additional Sm proteins and which is unable to assemble into the core snRNP. Interacts with SMN1; the interaction is direct. Interacts with GEMIN2; the interaction is direct. Interacts with SNRPD1; the interaction is direct. Interacts with SNRPF; the interaction is direct.

Its subcellular location is the cytoplasm. It localises to the cytosol. It is found in the nucleus. Its function is as follows. Plays a role in pre-mRNA splicing as a core component of the spliceosomal U1, U2, U4 and U5 small nuclear ribonucleoproteins (snRNPs), the building blocks of the spliceosome. Component of both the pre-catalytic spliceosome B complex and activated spliceosome C complexes. As a component of the minor spliceosome, involved in the splicing of U12-type introns in pre-mRNAs. The protein is Small nuclear ribonucleoprotein Sm D2 (SNRPD2) of Sus scrofa (Pig).